The sequence spans 193 residues: LOB domain-containing protein 12 (193 aa).

The LOB domain occupies 7–108 (SPCASCKLLR…MQLAVAQAEI (102 aa)).

It belongs to the LOB domain-containing protein family. In terms of tissue distribution, expressed predominantly in roots, and at low levels in shoots, floral stems and open flowers.

The sequence is that of LOB domain-containing protein 12 (LBD12) from Arabidopsis thaliana (Mouse-ear cress).